A 49-amino-acid polypeptide reads, in one-letter code: Large ribosomal subunit protein bL36 (49 aa).

It belongs to the bacterial ribosomal protein bL36 family.

This Pseudomonas fluorescens (strain ATCC BAA-477 / NRRL B-23932 / Pf-5) protein is Large ribosomal subunit protein bL36.